A 489-amino-acid polypeptide reads, in one-letter code: GTPase Der (489 aa).

2 consecutive EngA-type G domains span residues 3–166 and 200–373; these read PVVA…AEAM and IKLA…ESAT. Residues 9–16, 56–60, 118–121, 206–213, 253–257, and 318–321 contribute to the GTP site; these read GRPNVGKS, DTGGI, NKVD, GKPNVGKS, DTAGV, and NKWD. A KH-like domain is found at 374–458; sequence RRVSTSMLTR…PIQVRFQEGG (85 aa).

This sequence belongs to the TRAFAC class TrmE-Era-EngA-EngB-Septin-like GTPase superfamily. EngA (Der) GTPase family. Associates with the 50S ribosomal subunit.

Its function is as follows. GTPase that plays an essential role in the late steps of ribosome biogenesis. This chain is GTPase Der, found in Shewanella loihica (strain ATCC BAA-1088 / PV-4).